The following is a 357-amino-acid chain: Probable cinnamyl alcohol dehydrogenase 1 (357 aa).

Zn(2+) is bound at residue Cys47. Thr49 lines the NADP(+) pocket. His69, Glu70, Cys100, Cys103, Cys106, Cys114, and Cys163 together coordinate Zn(2+). Residues Thr167, Gly188–Gly193, Ser211–Lys216, Thr251, Gly275, and Ser298–Ile300 contribute to the NADP(+) site.

The protein belongs to the zinc-containing alcohol dehydrogenase family. In terms of assembly, homodimer. The cofactor is Zn(2+). In terms of processing, the N-terminus is blocked.

It carries out the reaction (E)-cinnamyl alcohol + NADP(+) = (E)-cinnamaldehyde + NADPH + H(+). The enzyme catalyses (E)-coniferol + NADP(+) = (E)-coniferaldehyde + NADPH + H(+). It catalyses the reaction (E)-sinapyl alcohol + NADP(+) = (E)-sinapaldehyde + NADPH + H(+). The catalysed reaction is (E)-4-coumaroyl alcohol + NADP(+) = (E)-4-coumaraldehyde + NADPH + H(+). It carries out the reaction (E)-caffeyl alcohol + NADP(+) = (E)-caffeyl aldehyde + NADPH + H(+). It functions in the pathway aromatic compound metabolism; phenylpropanoid biosynthesis. Functionally, involved in lignin biosynthesis. Catalyzes the final step specific for the production of lignin monomers. Catalyzes the NADPH-dependent reduction of coniferaldehyde, 5-hydroxyconiferaldehyde, sinapaldehyde, 4-coumaraldehyde and caffeyl aldehyde to their respective alcohols. The polypeptide is Probable cinnamyl alcohol dehydrogenase 1 (Nicotiana tabacum (Common tobacco)).